A 476-amino-acid chain; its full sequence is Methylenetetrahydrofolate--tRNA-(uracil-5-)-methyltransferase TrmFO (476 aa).

13 to 18 (GGGLAG) contacts FAD. The tract at residues 425–446 (PPLESPPTHGADGKKLRGPDKT) is disordered. Basic and acidic residues predominate over residues 435–446 (ADGKKLRGPDKT).

This sequence belongs to the MnmG family. TrmFO subfamily. FAD is required as a cofactor.

It localises to the cytoplasm. It catalyses the reaction uridine(54) in tRNA + (6R)-5,10-methylene-5,6,7,8-tetrahydrofolate + NADH + H(+) = 5-methyluridine(54) in tRNA + (6S)-5,6,7,8-tetrahydrofolate + NAD(+). The catalysed reaction is uridine(54) in tRNA + (6R)-5,10-methylene-5,6,7,8-tetrahydrofolate + NADPH + H(+) = 5-methyluridine(54) in tRNA + (6S)-5,6,7,8-tetrahydrofolate + NADP(+). Catalyzes the folate-dependent formation of 5-methyl-uridine at position 54 (M-5-U54) in all tRNAs. This Rhodopseudomonas palustris (strain BisB18) protein is Methylenetetrahydrofolate--tRNA-(uracil-5-)-methyltransferase TrmFO.